The sequence spans 113 residues: uncharacterized protein (113 aa).

A CHY-type; degenerate zinc finger spans residues 16–96; that stretch reads LVDNETRCFH…STVHCKYCNH (81 aa). Residues Cys-23, His-25, Cys-46, Cys-49, Cys-73, Cys-76, Cys-91, and Cys-94 each coordinate Zn(2+).

It is found in the cytoplasm. Its subcellular location is the nucleus. This is an uncharacterized protein from Schizosaccharomyces pombe (strain 972 / ATCC 24843) (Fission yeast).